We begin with the raw amino-acid sequence, 706 residues long: Elongation factor G (706 aa).

The region spanning 8 to 290 (NRYRNIGICA…AVIDYLPAPT (283 aa)) is the tr-type G domain. Residues 17–24 (AHVDAGKT), 88–92 (DTPGH), and 142–145 (NKMD) each bind GTP.

It belongs to the TRAFAC class translation factor GTPase superfamily. Classic translation factor GTPase family. EF-G/EF-2 subfamily.

The protein localises to the cytoplasm. In terms of biological role, catalyzes the GTP-dependent ribosomal translocation step during translation elongation. During this step, the ribosome changes from the pre-translocational (PRE) to the post-translocational (POST) state as the newly formed A-site-bound peptidyl-tRNA and P-site-bound deacylated tRNA move to the P and E sites, respectively. Catalyzes the coordinated movement of the two tRNA molecules, the mRNA and conformational changes in the ribosome. The chain is Elongation factor G from Stutzerimonas stutzeri (strain A1501) (Pseudomonas stutzeri).